A 336-amino-acid polypeptide reads, in one-letter code: Nucleoid-associated protein Spro_3255 (336 aa).

The protein belongs to the YejK family.

The protein resides in the cytoplasm. Its subcellular location is the nucleoid. In Serratia proteamaculans (strain 568), this protein is Nucleoid-associated protein Spro_3255.